We begin with the raw amino-acid sequence, 78 residues long: Translation initiation factor IF-1 (78 aa).

Positions 1–72 (MAKEAEMEFE…TRGRITYRKI (72 aa)) constitute an S1-like domain.

The protein belongs to the IF-1 family. Component of the 30S ribosomal translation pre-initiation complex which assembles on the 30S ribosome in the order IF-2 and IF-3, IF-1 and N-formylmethionyl-tRNA(fMet); mRNA recruitment can occur at any time during PIC assembly.

The protein localises to the cytoplasm. In terms of biological role, one of the essential components for the initiation of protein synthesis. Stabilizes the binding of IF-2 and IF-3 on the 30S subunit to which N-formylmethionyl-tRNA(fMet) subsequently binds. Helps modulate mRNA selection, yielding the 30S pre-initiation complex (PIC). Upon addition of the 50S ribosomal subunit IF-1, IF-2 and IF-3 are released leaving the mature 70S translation initiation complex. This Mesoplasma florum (strain ATCC 33453 / NBRC 100688 / NCTC 11704 / L1) (Acholeplasma florum) protein is Translation initiation factor IF-1.